A 213-amino-acid chain; its full sequence is Kynurenine formamidase (213 aa).

Residue Trp20 coordinates substrate. Zn(2+) is bound by residues His50, His54, and Asp56. Residue His60 is the Proton donor/acceptor of the active site. Residues His161 and Glu173 each contribute to the Zn(2+) site.

This sequence belongs to the Cyclase 1 superfamily. KynB family. In terms of assembly, homodimer. Zn(2+) serves as cofactor.

It carries out the reaction N-formyl-L-kynurenine + H2O = L-kynurenine + formate + H(+). Its pathway is amino-acid degradation; L-tryptophan degradation via kynurenine pathway; L-kynurenine from L-tryptophan: step 2/2. Catalyzes the hydrolysis of N-formyl-L-kynurenine to L-kynurenine, the second step in the kynurenine pathway of tryptophan degradation. The chain is Kynurenine formamidase from Pseudomonas aeruginosa (strain UCBPP-PA14).